The following is a 321-amino-acid chain: p-hydroxybenzoic acid efflux pump subunit AaeA (321 aa).

The helical transmembrane segment at 22-42 (VVITLVIVLCAIVAIFRVWAF) threads the bilayer.

Belongs to the membrane fusion protein (MFP) (TC 8.A.1) family.

Its subcellular location is the cell inner membrane. In terms of biological role, forms an efflux pump with AaeB. In Pectobacterium atrosepticum (strain SCRI 1043 / ATCC BAA-672) (Erwinia carotovora subsp. atroseptica), this protein is p-hydroxybenzoic acid efflux pump subunit AaeA.